We begin with the raw amino-acid sequence, 385 residues long: Phosphotransferase FrzJ (385 aa).

ATP-binding residues include Asn-38 and Lys-59. The active site involves Asp-245.

Belongs to the methylthioribose kinase family. Monomer.

The enzyme catalyses (1S,3S,6S,7S,8S,9S)-6-[(4-methoxyphenyl)methyl]-3-(methylamino)-5-azatricyclo[6.3.1.0(1,5)]dodecane-7,9-diol + ATP = (-)-FR901483 + ADP + 2 H(+). Its pathway is secondary metabolite biosynthesis. Its function is as follows. Phosphotransferase; part of the gene cluster that mediates the biosynthesis of the alkaloid (-)-FR901483, a potent immunosuppressant that shows efficacy in animal models and a probable inhibitor of purine nucleotide biosynthesis by targeting phosphoribosylpyrophosphate amidotransferase (PPAT). FrzJ catalyzes the last step of the pathway by phosphorylating the C4'-OH of dephospho-(-)-FR901483 to produce (-)-FR901483. The biosynthesis of (-)-FR901483 starts with the condensation of two L-tyrosines to yield (S,S)-dityrosyl-piperazine. This process occurs in 3 steps with the non-canonical nonribosomal peptide synthetase FrzA catalyzing the reduction of L-tyrosine into L-tyrosinal, the spontaneous condensation of 2 L-tyrosinal units, and the subsequent reduction by the NmrA-like family domain-containing oxidoreductase FrzB. The cytochrome P450 monooxygenase FrzC then performs coupling between N10 and C1' to morph the piperazine into a 1,4-diazabicyclo[3.2.1]octane spiro-fused to a 2,5-cyclohexadienone. The dienone portion is further reduced to cyclohexanone by the flavin-dependent reductase FrzD. The methyltranserases (MTs) FrzE and FrzF are then involved in the methylation at the C10' amine and the C4 phenolic oxygen, respectively. The order of the two MTs appear to be interchangeable. Cleavage of the C9-N10' bond by the dioxygenase FrzG then leads to formation of a conjugated iminium. In addition to the oxidation of C9, an additional dehydrogenation between C7 and C8 can occur to give a likely shunt product. The next biosynthetic step is the intramolecular aldol condensation catalyzed by the newly identified aldolase FrzH to yield an aza-tricyclic product with the formation of a C9-C3' bond. The short-chain dehydrogenase/reductase FrzI then produces dephospho-(-)-FR901483 that is phosphorylated at C4'-OH into (-)-FR901483 by the phosphotransferase FrzJ. The sequence is that of Phosphotransferase FrzJ from Cladobotryum sp.